Here is a 518-residue protein sequence, read N- to C-terminus: Circadian clock oscillator protein KaiC (518 aa).

The region spanning 1-247 (MTNLPEHQSS…FTINNGINIF (247 aa)) is the KaiC 1 domain. Ser-49, Gly-50, Thr-51, Gly-52, Lys-53, Thr-54, and Leu-55 together coordinate ATP. Thr-54 contacts Mg(2+). The active-site Proton acceptor in CI (KaiC 1) is Glu-78. ATP is bound at residue Ser-90. Residues 116–123 (QEVAGDFD) are B-loop, required to bind KaiB and SasA. Residues Lys-225, Leu-226, Arg-227, Thr-229, and His-231 each contribute to the ATP site. The linker stretch occupies residues 248–260 (PLGAMRLTQRSSN). The KaiC 2 domain occupies 261-518 (VRVSSGVKTL…AKGMQDLESE (258 aa)). Residues Thr-290, Gly-291, Thr-292, Gly-293, Lys-294, Thr-295, and Leu-296 each coordinate ATP. Thr-295 serves as a coordination point for Mg(2+). Glu-318 is a binding site for Mg(2+). The Proton acceptor in CII (KaiC 2) role is filled by Glu-318. Trp-331 is an ATP binding site. Position 431 is a phosphoserine; by autocatalysis (Ser-431). Thr-432 is subject to Phosphothreonine; by autocatalysis. Arg-451, Lys-457, Met-458, Arg-459, Ser-461, His-463, and Lys-465 together coordinate ATP. Residues 488 to 497 (GIISGTPTRI) form an A-loop, interacts with KaiA region.

Belongs to the KaiC family. In terms of assembly, homohexamer resembling 2 stacked donuts rings with a central pore nearly blocked on one side; hexamerization is dependent on ATP-binding. Binds 2 ATP per monomer, at the subunit interface on each ring. The KaiABC complex composition changes during the circadian cycle to control KaiC phosphorylation. Complexes KaiC(6), KaiA(2-4):KaiC(6), KaiB(6):KaiC(6) and KaiC(6):KaiB(6):KaiA(12) are among the most important forms, many form cooperatively. Interacts with SasA, probably as 1 SasA trimer:1 KaiC homohexamer, has highest affinity for unphosphorylated SasA. The CI domain binds to KaiB and SasA; as they have a similar fold they compete for the same site on CI. KaiB assumes a thioredoxin-like form called KaiB(fs) when bound to KaiC. The cofactor is Mg(2+). Post-translationally, phosphorylated on serine/threonine residues by autocatalysis. Both phosphorylated and unphosphorylated forms exist. Both autophosphorylates and autodephosphorylates. Phosphorylated form correlates with clock speed. Phosphorylated on serine and threonine residues by autocatalysis. Has a 4 step phosphorylation cycle; the autokinase acts first on Thr-432, then Ser-431. When Ser-431 is modified KaiC switches to an autophosphatase mode, acting first on phospho-Thr-432 then phospho-Ser-431.

The enzyme catalyses L-seryl-[protein] + ATP = O-phospho-L-seryl-[protein] + ADP + H(+). The catalysed reaction is L-threonyl-[protein] + ATP = O-phospho-L-threonyl-[protein] + ADP + H(+). It carries out the reaction ATP + H2O = ADP + phosphate + H(+). The interaction with KaiA enhances its phosphorylation status, while the interaction with KaiB decreases it. Functionally, central component of the KaiABC oscillator complex, which constitutes the main circadian regulator in cyanobacteria. Complex composition changes during the circadian cycle to control KaiC phosphorylation. KaiA stimulates KaiC autophosphorylation, while KaiB sequesters KaiA, leading to KaiC autodephosphorylation. Clock output pathways impact the RpaA transcriptional regulator. KaiC enhances the autophosphorylation activity of SasA, which then transfers its phosphate group to RpaA to activate it. KaiB and KaiC together enhance the phospho-RpaA dephosphatase activity of CikA. In terms of biological role, stimulates SasA autophosphorylation. Fully phosphorylated KaiC (tested with phosphomimetic Asp-431-432-Asp) is the best stimulant, requires the ATPase activity of the CII domain. Unphosphorylated SasA associates with KaiC and its autophosphorylation activity is enhanced. Phospho-SasA is released and associates with RpaA, transferring its phosphate group. Formation of the KaiA:KaiB complex is promoted by KaiC, helping switch KaiC from its autophosphorylation to autodephosphatase function. Has a weak, temperature-independent ATPase activity (about 14 molecules of ATP per day) that defines the circadian period. ATPase activity is mostly contributed by the CI domain; the CII domain augments the activity. The addition of KaiA increases activity. ATPase is inhibited during the KaiC phosphorylating phase and activated during the KaiC dephosphorylating phase. The protein is Circadian clock oscillator protein KaiC of Thermosynechococcus vestitus (strain NIES-2133 / IAM M-273 / BP-1).